The chain runs to 110 residues: Early E3B 12.7 kDa protein (110 aa).

The signal sequence occupies residues 1-16; that stretch reads MKTALVLFFMLIPVWA. A helical transmembrane segment spans residues 37 to 57; the sequence is YIGWVYGIMSGLVFVSSVVSL.

This sequence belongs to the adenoviridae E3_14 family. Post-translationally, phosphorylated on serine; O-glycosylated, but not N-glycosylated.

It is found in the host membrane. In terms of biological role, down-regulates the EGF receptor and prevents cytolysis by TNF. The polypeptide is Early E3B 12.7 kDa protein (Homo sapiens (Human)).